A 156-amino-acid polypeptide reads, in one-letter code: Small ribosomal subunit protein uS7 (156 aa).

It belongs to the universal ribosomal protein uS7 family. Part of the 30S ribosomal subunit. Contacts proteins S9 and S11.

Its function is as follows. One of the primary rRNA binding proteins, it binds directly to 16S rRNA where it nucleates assembly of the head domain of the 30S subunit. Is located at the subunit interface close to the decoding center, probably blocks exit of the E-site tRNA. The polypeptide is Small ribosomal subunit protein uS7 (Erwinia tasmaniensis (strain DSM 17950 / CFBP 7177 / CIP 109463 / NCPPB 4357 / Et1/99)).